We begin with the raw amino-acid sequence, 338 residues long: Ketol-acid reductoisomerase (NADP(+)) (338 aa).

Residues 1–181 (MKVFYDKDCD…GGGRAGIIET (181 aa)) enclose the KARI N-terminal Rossmann domain. NADP(+) contacts are provided by residues 24–27 (YGSQ), Arg-47, and Ser-52. The active site involves His-107. NADP(+) is bound at residue Gly-133. The KARI C-terminal knotted domain occupies 182 to 327 (NFREETETDL…GKLRAMMPWI (146 aa)). Positions 190, 194, 226, and 230 each coordinate Mg(2+). Ser-251 is a substrate binding site.

The protein belongs to the ketol-acid reductoisomerase family. Requires Mg(2+) as cofactor.

It carries out the reaction (2R)-2,3-dihydroxy-3-methylbutanoate + NADP(+) = (2S)-2-acetolactate + NADPH + H(+). It catalyses the reaction (2R,3R)-2,3-dihydroxy-3-methylpentanoate + NADP(+) = (S)-2-ethyl-2-hydroxy-3-oxobutanoate + NADPH + H(+). It functions in the pathway amino-acid biosynthesis; L-isoleucine biosynthesis; L-isoleucine from 2-oxobutanoate: step 2/4. Its pathway is amino-acid biosynthesis; L-valine biosynthesis; L-valine from pyruvate: step 2/4. In terms of biological role, involved in the biosynthesis of branched-chain amino acids (BCAA). Catalyzes an alkyl-migration followed by a ketol-acid reduction of (S)-2-acetolactate (S2AL) to yield (R)-2,3-dihydroxy-isovalerate. In the isomerase reaction, S2AL is rearranged via a Mg-dependent methyl migration to produce 3-hydroxy-3-methyl-2-ketobutyrate (HMKB). In the reductase reaction, this 2-ketoacid undergoes a metal-dependent reduction by NADPH to yield (R)-2,3-dihydroxy-isovalerate. This chain is Ketol-acid reductoisomerase (NADP(+)), found in Bordetella pertussis (strain Tohama I / ATCC BAA-589 / NCTC 13251).